The primary structure comprises 344 residues: Glycerol-3-phosphate dehydrogenase [NAD(P)+] (344 aa).

4 residues coordinate NADPH: serine 23, tyrosine 24, histidine 44, and lysine 118. Sn-glycerol 3-phosphate-binding residues include lysine 118, glycine 147, and threonine 149. Alanine 151 serves as a coordination point for NADPH. Residues lysine 203, aspartate 256, serine 266, arginine 267, and asparagine 268 each contribute to the sn-glycerol 3-phosphate site. Lysine 203 serves as the catalytic Proton acceptor. NADPH is bound at residue arginine 267. Valine 291 and glutamate 293 together coordinate NADPH.

The protein belongs to the NAD-dependent glycerol-3-phosphate dehydrogenase family.

It is found in the cytoplasm. It catalyses the reaction sn-glycerol 3-phosphate + NAD(+) = dihydroxyacetone phosphate + NADH + H(+). The catalysed reaction is sn-glycerol 3-phosphate + NADP(+) = dihydroxyacetone phosphate + NADPH + H(+). It participates in membrane lipid metabolism; glycerophospholipid metabolism. In terms of biological role, catalyzes the reduction of the glycolytic intermediate dihydroxyacetone phosphate (DHAP) to sn-glycerol 3-phosphate (G3P), the key precursor for phospholipid synthesis. In Vibrio cholerae serotype O1 (strain ATCC 39541 / Classical Ogawa 395 / O395), this protein is Glycerol-3-phosphate dehydrogenase [NAD(P)+].